The sequence spans 356 residues: Cyclin-D2-2 (356 aa).

Residues 325–343 show a composition bias toward polar residues; the sequence is LGSSQSNSNNKDYNSQDSA. Positions 325–356 are disordered; that stretch reads LGSSQSNSNNKDYNSQDSAPASKRRRLNTTPI. A compositionally biased stretch (basic residues) spans 346–356; the sequence is SKRRRLNTTPI.

It belongs to the cyclin family. Cyclin D subfamily.

This is Cyclin-D2-2 (CYCD2-2) from Oryza sativa subsp. japonica (Rice).